Consider the following 311-residue polypeptide: tRNA pseudouridine synthase B (311 aa).

Asp-52 (nucleophile) is an active-site residue.

The protein belongs to the pseudouridine synthase TruB family. Type 1 subfamily.

The catalysed reaction is uridine(55) in tRNA = pseudouridine(55) in tRNA. Functionally, responsible for synthesis of pseudouridine from uracil-55 in the psi GC loop of transfer RNAs. This is tRNA pseudouridine synthase B from Burkholderia mallei (strain ATCC 23344).